A 337-amino-acid polypeptide reads, in one-letter code: Putative transcription activator protein HfaB (337 aa).

Residues Ala303–Gln313 are compositionally biased toward polar residues. Residues Ala303–Tyr337 are disordered. Basic and acidic residues predominate over residues Thr314–Tyr337.

Required for the attachment of the holdfast to the cell. May be involved in the positive regulation of hfaC. This is Putative transcription activator protein HfaB (hfaB) from Caulobacter vibrioides (strain ATCC 19089 / CIP 103742 / CB 15) (Caulobacter crescentus).